The following is a 326-amino-acid chain: Siroheme decarboxylase NirDL subunit (326 aa).

This sequence belongs to the Ahb/Nir family. Forms a complex composed of NirDL, NirG and NirH. All proteins are required for the total conversion of siroheme to didecarboxysiroheme.

The catalysed reaction is siroheme + 2 H(+) = 12,18-didecarboxysiroheme + 2 CO2. It functions in the pathway porphyrin-containing compound metabolism. Functionally, involved in heme d1 biosynthesis. Catalyzes the decarboxylation of siroheme into didecarboxysiroheme. Siroheme is probably decarboxylated to monodecarboxysiroheme, which is in turn decarboxylated to didecarboxysiroheme. This chain is Siroheme decarboxylase NirDL subunit, found in Paracoccus pantotrophus (Thiosphaera pantotropha).